A 206-amino-acid polypeptide reads, in one-letter code: Superoxide dismutase [Mn] (206 aa).

Mn(2+) contacts are provided by His30, His78, Asp166, and His170.

It belongs to the iron/manganese superoxide dismutase family. In terms of assembly, homodimer. Mn(2+) is required as a cofactor.

It catalyses the reaction 2 superoxide + 2 H(+) = H2O2 + O2. Destroys superoxide anion radicals which are normally produced within the cells and which are toxic to biological systems. This is Superoxide dismutase [Mn] (sodA) from Chlamydia trachomatis serovar D (strain ATCC VR-885 / DSM 19411 / UW-3/Cx).